The chain runs to 1434 residues: Actin cytoskeleton-regulatory complex protein pan1 (1434 aa).

The disordered stretch occupies residues 1–133; it reads MYSSSNTFLG…LPVRQAPRTS (133 aa). Residues 28–49 are compositionally biased toward low complexity; sequence SQQFASGQQQQPPQQGGFAPQP. Composition is skewed to polar residues over residues 55 to 68 and 88 to 120; these read QMSS…QPQA and PQSQ…QVPA. Residues 171 to 259 enclose the EH 1 domain; the sequence is DQAKFEQLFK…EKIRNEVSSM (89 aa). The EF-hand 1 domain maps to 203–238; sequence LPGNDLSKIWVLSDSTKSGQLFFPEFALAMYLCNLR. The segment at 271 to 380 is disordered; it reads QPEPAVRTNV…YNGPRPPMPP (110 aa). Residues 294-303 show a composition bias toward pro residues; that stretch reads PPAPQQPQPQ. Residues 306 to 341 show a composition bias toward polar residues; it reads SNAQLLTQLTAQPTGFPQPTGFQQSQSPFPGQNSAL. The span at 349-359 shows a compositional bias: low complexity; that stretch reads PGQPQQLQPQP. A compositionally biased stretch (polar residues) spans 361–370; it reads GFMTNPQPTG. The EH 2 domain maps to 460 to 549; that stretch reads EKKIYDDLFR…PELVPPSTRN (90 aa). Residues 493–528 form the EF-hand 2 domain; the sequence is LDRSDLERIWTLADPNNRGRLNMDEFAVAMHLIYRK. 4 disordered regions span residues 587–615, 768–814, 862–1063, and 1078–1434; these read AGYR…SEEE, ELAG…ESVR, RTAH…EFLK, and QVRQ…RVLD. Residues 600-611 show a composition bias toward polar residues; sequence NGRTPSPAASQA. Positions 607-815 form a coiled coil; that stretch reads AASQASEEEL…TRDVEESVRE (209 aa). The segment covering 783–814 has biased composition (basic and acidic residues); sequence AATRRLEAENATVKAERERNETMTRDVEESVR. A compositionally biased stretch (polar residues) spans 895-910; that stretch reads SQHSPTPTGSVVSAGS. 5 stretches are compositionally biased toward basic and acidic residues: residues 911 to 929, 949 to 981, 1016 to 1063, 1085 to 1105, and 1112 to 1124; these read THED…RIAE, RQER…RLAE, EAKK…EFLK, KKQE…EQEA, and AELE…ERQL. Residues 941-1137 are a coiled coil; sequence DAGETLLQRQ…LEGLDESSSD (197 aa). Acidic residues predominate over residues 1129 to 1140; the sequence is EGLDESSSDEEG. Over residues 1144-1155 the composition is skewed to polar residues; sequence ITPQDSTPTQSQ. Residues 1173-1193 show a composition bias toward low complexity; sequence PELDVVTSPAESASSHAAPTS. Positions 1215 to 1225 are enriched in pro residues; it reads VPPPPPAPQPA. Basic and acidic residues predominate over residues 1257–1266; the sequence is LERKSRVRPE. The span at 1267 to 1287 shows a compositional bias: acidic residues; that stretch reads VDDDWSAAGSDFDDSSDDDDE. The span at 1320–1329 shows a compositional bias: polar residues; the sequence is SKSSTPVQDS. Pro residues predominate over residues 1345-1395; the sequence is AVPPPPPPPPAPAPAVPSPSAAAPPPPPPAPSMAPPVPPPGVPPPPAPPAA. In terms of domain architecture, WH2 spans 1401 to 1418; sequence GRGALLASIQAGTGLRKV. Over residues 1421–1434 the composition is skewed to polar residues; it reads NDRSTSSSAGRVLD.

Belongs to the PAN1 family. Component of the PAN1 actin cytoskeleton-regulatory complex.

It localises to the cell membrane. Its subcellular location is the endosome membrane. The protein resides in the cytoplasm. The protein localises to the cytoskeleton. It is found in the actin patch. Component of the PAN1 actin cytoskeleton-regulatory complex required for the internalization of endosomes during actin-coupled endocytosis. The complex links the site of endocytosis to the cell membrane-associated actin cytoskeleton. Mediates uptake of external molecules and vacuolar degradation of plasma membrane proteins. Plays a role in the proper organization of the cell membrane-associated actin cytoskeleton and promotes its destabilization. This chain is Actin cytoskeleton-regulatory complex protein pan1 (pan1), found in Aspergillus niger (strain ATCC MYA-4892 / CBS 513.88 / FGSC A1513).